Here is a 301-residue protein sequence, read N- to C-terminus: Ornithine carbamoyltransferase (301 aa).

Carbamoyl phosphate-binding positions include 46 to 49 (STRT), Gln73, Arg97, and 124 to 127 (HPCQ). Residues Asn154, Asp218, and 222 to 223 (SM) each bind L-ornithine. Residues 258-259 (CL) and Arg286 each bind carbamoyl phosphate.

It belongs to the aspartate/ornithine carbamoyltransferase superfamily. OTCase family.

It is found in the cytoplasm. It catalyses the reaction carbamoyl phosphate + L-ornithine = L-citrulline + phosphate + H(+). The protein operates within amino-acid biosynthesis; L-arginine biosynthesis; L-arginine from L-ornithine and carbamoyl phosphate: step 1/3. In terms of biological role, reversibly catalyzes the transfer of the carbamoyl group from carbamoyl phosphate (CP) to the N(epsilon) atom of ornithine (ORN) to produce L-citrulline. In Methanothermobacter thermautotrophicus (strain ATCC 29096 / DSM 1053 / JCM 10044 / NBRC 100330 / Delta H) (Methanobacterium thermoautotrophicum), this protein is Ornithine carbamoyltransferase (argF).